A 276-amino-acid chain; its full sequence is Undecaprenyl-diphosphatase (276 aa).

Helical transmembrane passes span 43–63 (RAMAFNIIIQLAAILAVVWEF), 85–105 (GNLLLAFMPAVVLGVLFADLI), 109–129 (LFNPITVATALVVGGVIMLWA), 183–203 (AATEFSFFLAMPTMVGAAVYS), 214–234 (ADLPVFAIGFVTSFIFAMIAV), and 249–269 (FAWYRIVFGLLILATWQFGWV).

Belongs to the UppP family.

The protein resides in the cell inner membrane. It catalyses the reaction di-trans,octa-cis-undecaprenyl diphosphate + H2O = di-trans,octa-cis-undecaprenyl phosphate + phosphate + H(+). In terms of biological role, catalyzes the dephosphorylation of undecaprenyl diphosphate (UPP). Confers resistance to bacitracin. The chain is Undecaprenyl-diphosphatase from Pseudomonas putida (strain GB-1).